Reading from the N-terminus, the 281-residue chain is MSLKRCRALPVVAIVALVASGVIMFIWSQQRRLIYFPSAGPVPSASSVLPAGRDVVVETQDGMRLGGWYFPHTSGGSGPAVLVCNGNAGDRSMRAELAVALHGLGLSVLLFDYRGYGGNPGRPSEQGLAADARAAQEWLSGQSDVDPARIAYFGESLGAAVAVGLAVQRPPAALVLRSPFTSLAEVGAVHYPWLPLRRLLLDHYPSIERIASVHAPVLVIAGGSDDIVPATLSERLVAAAAEPKRYVVVPGVGHNDPELLDGRVMLDAIRRFLTETAVLGQ.

The next 4 helical transmembrane spans lie at 8–28 (ALPVVAIVALVASGVIMFIWS), 97–117 (LAVALHGLGLSVLLFDYRGYG), 147–167 (PARIAYFGESLGAAVAVGLAV), and 210–230 (IASVHAPVLVIAGGSDDIVPA).

The protein to S.pombe bem46 and yeast YNL320w.

The protein localises to the cell membrane. This is an uncharacterized protein from Mycobacterium tuberculosis (strain ATCC 25618 / H37Rv).